A 215-amino-acid chain; its full sequence is UPF0056 membrane protein YhcE (215 aa).

A run of 6 helical transmembrane segments spans residues F14–M34, V54–I74, I81–E101, V120–W140, I147–L167, and I189–I209.

Belongs to the UPF0056 (MarC) family.

The protein localises to the cell membrane. The sequence is that of UPF0056 membrane protein YhcE (ychE) from Escherichia coli (strain K12).